A 908-amino-acid polypeptide reads, in one-letter code: DNA (cytosine-5)-methyltransferase 3A (908 aa).

Low complexity predominate over residues M1–S13. Disordered stretches follow at residues M1–R183 and N226–E281. Residues L14–E37 are compositionally biased toward basic and acidic residues. Residues K44–H54 show a composition bias toward basic residues. Residues T69–G80 are compositionally biased toward polar residues. Position 102 is a phosphoserine (S102). Residues G110 to A124 are compositionally biased toward low complexity. At T120 the chain carries Phosphothreonine. A Glycyl lysine isopeptide (Lys-Gly) (interchain with G-Cter in SUMO2) cross-link involves residue K158. An Omega-N-methylarginine modification is found at R167. The interaction with DNMT1 and DNMT3B stretch occupies residues S195 to N399. Residues S239 and S251 each carry the phosphoserine modification. Residues A242–T256 show a composition bias toward polar residues. A Phosphothreonine modification is found at T257. The span at A265–D275 shows a compositional bias: basic and acidic residues. A PWWP domain is found at I288–F346. Phosphoserine occurs at positions 386 and 389. Positions A443–K462 are disordered. The 133-residue stretch at E478–D610 folds into the ADD domain. The GATA-type; atypical zinc finger occupies I489–E519. The interaction with the PRC2/EED-EZH2 complex stretch occupies residues C490–C582. The PHD-type; atypical zinc-finger motif lies at Q530 to G586. The SAM-dependent MTase C5-type domain maps to I630–V908. S-adenosyl-L-methionine is bound by residues D637–T641, E660, and D682–R684. Residue C706 is part of the active site. C706 carries the post-translational modification S-methylcysteine; by autocatalysis. S-adenosyl-L-methionine is bound at residue R887 to W889.

Belongs to the class I-like SAM-binding methyltransferase superfamily. C5-methyltransferase family. As to quaternary structure, heterotetramer composed of 1 DNMT3A homodimer and 2 DNMT3L subunits (DNMT3L-DNMT3A-DNMT3A-DNMT3L). Interacts with DNMT1 and DNMT3B. Interacts with MPHOSPH8. Interacts with histone H3 that is not methylated at 'Lys-4' (H3K4). Binds the ZBTB18 transcriptional repressor. Interacts with SETDB1. Associates with HDAC1 through its ADD domain. Interacts with UHRF1. Interacts with the PRC2/EED-EZH2 complex. Interacts with UBC9, PIAS1 and PIAS2. Interacts with SPOCD1. Interacts with ZNF263; recruited to the SIX3 promoter along with other proteins involved in chromatin modification and transcriptional corepression where it contributes to transcriptional repression. Auto-methylated at Cys-706: auto-methylation takes place in absence of DNA substrate and inactivates the DNA methyltransferase activity. Inactivation by auto-methylation may be used to inactivate unused DNA methyltransferases in the cell. In terms of processing, sumoylated; sumoylation disrupts the ability to interact with histone deacetylases (HDAC1 and HDAC2) and repress transcription. In terms of tissue distribution, isoform 1 is expressed ubiquitously at low levels. Expression of isoform 2 is restricted to tissues containing cells which are undergoing active de novo methylation, including spleen, testis and thymus.

Its subcellular location is the nucleus. It is found in the chromosome. It localises to the cytoplasm. The catalysed reaction is a 2'-deoxycytidine in DNA + S-adenosyl-L-methionine = a 5-methyl-2'-deoxycytidine in DNA + S-adenosyl-L-homocysteine + H(+). It carries out the reaction L-cysteinyl-[protein] + S-adenosyl-L-methionine = S-methyl-L-cysteinyl-[protein] + S-adenosyl-L-homocysteine + H(+). Its activity is regulated as follows. Activated by binding to the regulatory factor DNMT3L. Auto-methylation at Cys-706 in absence of DNA inactivates the DNA methyltransferase activity. Its function is as follows. Required for genome-wide de novo methylation and is essential for the establishment of DNA methylation patterns during development. DNA methylation is coordinated with methylation of histones. It modifies DNA in a non-processive manner and also methylates non-CpG sites. May preferentially methylate DNA linker between 2 nucleosomal cores and is inhibited by histone H1. Plays a role in paternal and maternal imprinting. Required for methylation of most imprinted loci in germ cells. Acts as a transcriptional corepressor for ZBTB18. Recruited to trimethylated 'Lys-36' of histone H3 (H3K36me3) sites. Can actively repress transcription through the recruitment of HDAC activity. Also has weak auto-methylation activity on Cys-706 in absence of DNA. The chain is DNA (cytosine-5)-methyltransferase 3A from Mus musculus (Mouse).